Here is a 132-residue protein sequence, read N- to C-terminus: Myelin P2 protein (132 aa).

S2 is subject to N-acetylserine. R107 contacts (9Z)-octadecenoate. A hexadecanoate-binding site is contributed by R107. C118 and C125 are oxidised to a cystine. 127-129 serves as a coordination point for (9Z)-octadecenoate; the sequence is RIY. 127-129 contacts hexadecanoate; the sequence is RIY.

Belongs to the calycin superfamily. Fatty-acid binding protein (FABP) family. As to quaternary structure, monomer.

It localises to the cytoplasm. May play a role in lipid transport protein in Schwann cells. May bind cholesterol. The sequence is that of Myelin P2 protein (PMP2) from Bos taurus (Bovine).